Reading from the N-terminus, the 452-residue chain is Enolase (452 aa).

Q167 lines the (2R)-2-phosphoglycerate pocket. E209 (proton donor) is an active-site residue. Positions 250, 307, and 334 each coordinate Mg(2+). K359, R388, S389, and K410 together coordinate (2R)-2-phosphoglycerate. K359 serves as the catalytic Proton acceptor.

It belongs to the enolase family. It depends on Mg(2+) as a cofactor.

Its subcellular location is the cytoplasm. It localises to the secreted. The protein localises to the cell surface. It catalyses the reaction (2R)-2-phosphoglycerate = phosphoenolpyruvate + H2O. Its pathway is carbohydrate degradation; glycolysis; pyruvate from D-glyceraldehyde 3-phosphate: step 4/5. Functionally, catalyzes the reversible conversion of 2-phosphoglycerate (2-PG) into phosphoenolpyruvate (PEP). It is essential for the degradation of carbohydrates via glycolysis. The polypeptide is Enolase (Mesomycoplasma hyopneumoniae (strain 232) (Mycoplasma hyopneumoniae)).